The chain runs to 218 residues: Thiopurine S-methyltransferase (218 aa).

The S-adenosyl-L-methionine site is built by Trp10, Leu45, Glu66, and Arg123.

This sequence belongs to the class I-like SAM-binding methyltransferase superfamily. TPMT family.

The protein resides in the cytoplasm. The enzyme catalyses S-adenosyl-L-methionine + a thiopurine = S-adenosyl-L-homocysteine + a thiopurine S-methylether.. The chain is Thiopurine S-methyltransferase from Pseudomonas fluorescens (strain SBW25).